Consider the following 289-residue polypeptide: Palmitoyl-protein thioesterase 3 (289 aa).

The N-terminal stretch at 1–20 (MRILSSLILLIALAIALVSA) is a signal peptide. The active site involves S97. Residues N189 and N195 are each glycosylated (N-linked (GlcNAc...) asparagine). Residues D210 and H266 contribute to the active site. N-linked (GlcNAc...) asparagine glycosylation is present at N281.

This sequence belongs to the palmitoyl-protein thioesterase family.

It is found in the lysosome. The catalysed reaction is S-hexadecanoyl-L-cysteinyl-[protein] + H2O = L-cysteinyl-[protein] + hexadecanoate + H(+). In terms of biological role, removes thioester-linked fatty acyl groups such as palmitate from modified cysteine residues in proteins or peptides during lysosomal degradation. The protein is Palmitoyl-protein thioesterase 3 (ppt3) of Dictyostelium discoideum (Social amoeba).